We begin with the raw amino-acid sequence, 383 residues long: Ovalbumin (383 aa).

At G2 the chain carries N-acetylglycine. Positions H22–D48 form a signal peptide, not cleaved. S69 carries the phosphoserine modification. C74 and C121 form a disulfide bridge. N-linked (GlcNAc...) asparagine glycans are attached at residues N293 and N312. S345 bears the Phosphoserine mark.

Belongs to the serpin family. Ov-serpin subfamily. In terms of processing, the signal sequence is not cleaved. The functional signal for membrane translocation of ovalbumin becomes accessible when the nascent chain is 50 to 60 residues long. The hydrophobic sequence which lies between residues 27 and 43 folds back on the preceding residues to form an amphipathic hairpin structure which is the signal element recognized by the membrane. As to expression, major protein of egg white.

The protein localises to the secreted. Functionally, storage protein of egg white. Lack protease inhibitory activity. The chain is Ovalbumin (SERPINB14) from Coturnix coturnix (Common quail).